A 236-amino-acid chain; its full sequence is L-aspartate dehydrogenase (236 aa).

NAD(+) is bound by residues 10–11 (AI), aspartate 31, 58–59 (AS), tyrosine 66, 80–81 (LS), alanine 111, and asparagine 162. Histidine 189 is a catalytic residue. Residue 212–215 (NPKT) participates in NAD(+) binding.

Belongs to the L-aspartate dehydrogenase family. Homodimer.

The catalysed reaction is L-aspartate + NADP(+) + H2O = oxaloacetate + NH4(+) + NADPH + H(+). It catalyses the reaction L-aspartate + NAD(+) + H2O = oxaloacetate + NH4(+) + NADH + H(+). It functions in the pathway cofactor biosynthesis; NAD(+) biosynthesis; iminoaspartate from L-aspartate (dehydrogenase route): step 1/1. Its function is as follows. Specifically catalyzes the NAD or NADP-dependent dehydrogenation of L-aspartate to iminoaspartate. The protein is L-aspartate dehydrogenase of Archaeoglobus fulgidus (strain ATCC 49558 / DSM 4304 / JCM 9628 / NBRC 100126 / VC-16).